The following is a 372-amino-acid chain: Ciliary neurotrophic factor receptor subunit alpha (372 aa).

The first 22 residues, Met1 to Thr22, serve as a signal peptide directing secretion. An Ig-like C2-type domain is found at Pro27–His104. Cys46 and Cys89 form a disulfide bridge. Asn60, Asn70, Asn142, and Asn190 each carry an N-linked (GlcNAc...) asparagine glycan. 2 Fibronectin type-III domains span residues Pro108 to Asp205 and Pro206 to Pro306. Positions Trp290–Ser294 match the WSXWS motif motif. Residues Pro301 to Gly338 are disordered. A compositionally biased stretch (low complexity) spans Thr311–Leu326. Ser342 carries GPI-anchor amidated serine lipidation. Positions Gly343–Ile372 are cleaved as a propeptide — removed in mature form.

This sequence belongs to the type I cytokine receptor family. Type 3 subfamily. Forms a heterotrimer with LIFR and IL6ST. Interacts with heterodimeric neurotropic cytokine composed of CLCF1/CLC and CRLF1/CLF-1. Either alone or in complex with the heterodimer CLCF1-CRLF1 interacts with SORL1; this interaction may promote internalization and lysosomal degradation.

Its subcellular location is the cell membrane. Functionally, binds to CNTF. The alpha subunit provides the receptor specificity. The sequence is that of Ciliary neurotrophic factor receptor subunit alpha (Cntfr) from Mus musculus (Mouse).